The sequence spans 136 residues: uncharacterized protein (136 aa).

2 helical membrane-spanning segments follow: residues I25–F47 and I78–A97.

Its subcellular location is the cell membrane. This is an uncharacterized protein from Bacillus subtilis (strain 168).